Reading from the N-terminus, the 644-residue chain is Exoribonuclease 2 (644 aa).

The RNB domain occupies 189–516 (RQDLTALNFV…NHRLLKAVIK (328 aa)). One can recognise an S1 motif domain in the interval 561 to 643 (NTRFAAEIID…ETRSIIARPA (83 aa)).

The protein belongs to the RNR ribonuclease family. RNase II subfamily.

The protein resides in the cytoplasm. The enzyme catalyses Exonucleolytic cleavage in the 3'- to 5'-direction to yield nucleoside 5'-phosphates.. Its function is as follows. Involved in mRNA degradation. Hydrolyzes single-stranded polyribonucleotides processively in the 3' to 5' direction. The sequence is that of Exoribonuclease 2 from Salmonella choleraesuis (strain SC-B67).